The following is a 1076-amino-acid chain: Envelopment polyprotein (1076 aa).

The signal sequence occupies residues Met1 to Ala18. At Trp19–Trp455 the chain is on the lumenal side. 9 disulfides stabilise this stretch: Cys28/Cys51, Cys145/Cys158, Cys182/Cys329, Cys208/Cys218, Cys260/Cys307, Cys289/Cys294, Cys351/Cys354, Cys358/Cys426, and Cys378/Cys383. The chain crosses the membrane as a helical span at residues Leu456–Leu476. The tract at residues Arg477–Leu523 is golgi retention signal. Topologically, residues Arg477–Gly539 are cytoplasmic. Residues Gly544–Gly566 are internal signal sequence for glycoprotein C. Disulfide bonds link Cys567–Cys608, Cys580–Cys590, Cys633–Cys729, Cys648–Cys845, Cys654–Cys702, Cys660–Cys709, Cys664–Cys691, Cys695–Cys700, Cys782–Cys797, and Cys813–Cys827. The Lumenal segment spans residues Cys567–Trp1040. A fusion loop region spans residues Cys654–Cys660. Residues Cys695–Cys709 form a fusion loop region. N-linked (GlcNAc...) asparagine; by host glycans are attached at residues Asn857 and Asn918. Intrachain disulfides connect Cys912–Cys982 and Cys922–Cys925. The N-linked (GlcNAc...) asparagine; by host glycan is linked to Asn940. Residues Ile1041–Ile1061 form a helical membrane-spanning segment. Residues Thr1062–Ala1076 are Cytoplasmic-facing.

The protein belongs to the phlebovirus envelope glycoprotein family. In terms of assembly, heterodimer with glycoprotein C. As to quaternary structure, heterodimer with glycoprotein N. Homotrimer (postfusion). In terms of processing, specific enzymatic cleavages in vivo yield mature proteins Glycoprotein C, and Glycoprotein N. Glycosylated. Post-translationally, palmitoylated.

Its subcellular location is the virion membrane. It localises to the host Golgi apparatus membrane. The protein resides in the host endoplasmic reticulum membrane. Structural component of the virion that interacts with glycoprotein C. It shields the hydrophobic fusion loops of the glycoprotein C, preventing premature fusion. The glycoprotein protrusions are arranged on an icosahedral lattice, with T=12 triangulation. They are able to attach the virion to the host cell receptor CD209/DC-SIGN and to promote fusion of membranes with the late endosome after endocytosis of the virion. Plays a role in the packaging of ribonucleoproteins during virus assembly. Functionally, structural component of the virion that interacts with glycoprotein N. Acts as a class II fusion protein that is activated upon acidification and subsequent repositioning of the glycoprotein N. The glycoprotein protrusions are arranged on an icosahedral lattice, with T=12 triangulation. They are able to attach the virion to the host cell receptor CD209/DC-SIGN and to promote fusion of membranes with the late endosome after endocytosis of the virion. This Alces americanus (American moose) protein is Envelopment polyprotein (GP).